The primary structure comprises 227 residues: Ribose-5-phosphate isomerase A (227 aa).

Substrate contacts are provided by residues threonine 26–threonine 29, aspartate 82–aspartate 85, and lysine 95–glycine 98. Glutamate 104 serves as the catalytic Proton acceptor. Lysine 122 serves as a coordination point for substrate.

The protein belongs to the ribose 5-phosphate isomerase family. In terms of assembly, homodimer.

The catalysed reaction is aldehydo-D-ribose 5-phosphate = D-ribulose 5-phosphate. It functions in the pathway carbohydrate degradation; pentose phosphate pathway; D-ribose 5-phosphate from D-ribulose 5-phosphate (non-oxidative stage): step 1/1. In terms of biological role, catalyzes the reversible conversion of ribose-5-phosphate to ribulose 5-phosphate. The chain is Ribose-5-phosphate isomerase A from Streptococcus pneumoniae serotype 4 (strain ATCC BAA-334 / TIGR4).